The chain runs to 350 residues: Ion-translocating oxidoreductase complex subunit D (350 aa).

5 consecutive transmembrane segments (helical) span residues 20 to 40, 44 to 64, 68 to 88, 89 to 109, and 125 to 145; these read VMVL…YFFG, LIQI…ILKI, PVLN…LAIS, IPPL…IIFV, and MAGY…WLPV. FMN phosphoryl threonine is present on T187. The next 5 helical transmembrane spans lie at 215–235, 241–261, 267–287, 300–320, and 322–342; these read SWQQ…ILLF, WHIP…AFAY, APPL…FILS, ILYA…GGYP, and AVAF…YYTQ.

The protein belongs to the NqrB/RnfD family. In terms of assembly, the complex is composed of six subunits: RnfA, RnfB, RnfC, RnfD, RnfE and RnfG. The cofactor is FMN.

The protein resides in the cell inner membrane. Its function is as follows. Part of a membrane-bound complex that couples electron transfer with translocation of ions across the membrane. This chain is Ion-translocating oxidoreductase complex subunit D, found in Psychromonas ingrahamii (strain DSM 17664 / CCUG 51855 / 37).